The following is a 148-amino-acid chain: Cytochrome c oxidase subunit 4, mitochondrial (148 aa).

Residues 1–24 constitute a mitochondrion transit peptide; the sequence is MFALRSIRSATKAFQTTSIVSQRG.

As to quaternary structure, slime mold cytochrome c oxidase consists of at least seven different polypeptides species, subunits I, II, III, IV, V, VI, and VIIe/s in order of MW.

The protein localises to the mitochondrion inner membrane. The catalysed reaction is 4 Fe(II)-[cytochrome c] + O2 + 8 H(+)(in) = 4 Fe(III)-[cytochrome c] + 2 H2O + 4 H(+)(out). This protein is one of the nuclear-coded polypeptide chains of cytochrome c oxidase, the terminal oxidase in mitochondrial electron transport. The polypeptide is Cytochrome c oxidase subunit 4, mitochondrial (cxdA) (Dictyostelium discoideum (Social amoeba)).